A 72-amino-acid chain; its full sequence is DNA-directed RNA polymerase subunit omega (72 aa).

Belongs to the RNA polymerase subunit omega family. The RNAP catalytic core consists of 2 alpha, 1 beta, 1 beta' and 1 omega subunit. When a sigma factor is associated with the core the holoenzyme is formed, which can initiate transcription.

The catalysed reaction is RNA(n) + a ribonucleoside 5'-triphosphate = RNA(n+1) + diphosphate. Promotes RNA polymerase assembly. Latches the N- and C-terminal regions of the beta' subunit thereby facilitating its interaction with the beta and alpha subunits. This is DNA-directed RNA polymerase subunit omega from Staphylococcus aureus (strain Mu3 / ATCC 700698).